Consider the following 177-residue polypeptide: Bifunctional protein PyrR (177 aa).

A PRPP-binding motif is present at residues 99-111 (VVLVDDVIYKGRT).

The protein belongs to the purine/pyrimidine phosphoribosyltransferase family. PyrR subfamily.

It catalyses the reaction UMP + diphosphate = 5-phospho-alpha-D-ribose 1-diphosphate + uracil. Functionally, regulates the transcription of the pyrimidine nucleotide (pyr) operon in response to exogenous pyrimidines. Also displays a weak uracil phosphoribosyltransferase activity which is not physiologically significant. The polypeptide is Bifunctional protein PyrR (Gloeothece citriformis (strain PCC 7424) (Cyanothece sp. (strain PCC 7424))).